The chain runs to 359 residues: DNA polymerase IV (359 aa).

The 182-residue stretch at 4-185 (IIHIDMDCYF…LSLRKIPGVG (182 aa)) folds into the UmuC domain. Residues Asp8 and Asp103 each coordinate Mg(2+). Glu104 is an active-site residue.

Belongs to the DNA polymerase type-Y family. Monomer. The cofactor is Mg(2+).

It is found in the cytoplasm. The catalysed reaction is DNA(n) + a 2'-deoxyribonucleoside 5'-triphosphate = DNA(n+1) + diphosphate. In terms of biological role, poorly processive, error-prone DNA polymerase involved in untargeted mutagenesis. Copies undamaged DNA at stalled replication forks, which arise in vivo from mismatched or misaligned primer ends. These misaligned primers can be extended by PolIV. Exhibits no 3'-5' exonuclease (proofreading) activity. May be involved in translesional synthesis, in conjunction with the beta clamp from PolIII. The polypeptide is DNA polymerase IV (Shewanella sp. (strain MR-7)).